Here is a 379-residue protein sequence, read N- to C-terminus: Early boundary activity protein 3 (379 aa).

The heterotrimeric Elba complex consists of Elba1, Elba2 and Elba3.

Its subcellular location is the nucleus. In terms of biological role, the heterotrimeric Elba complex is required for chromatin domain boundary function during early embryogenesis. It binds to a 8-bp sequence 5'-CCAATAAG-3' in the Fab-7 insulator or boundary element in the bithorax complex and contributes to its insulator or boundary activity. Elba3 lacks DNA-binding activity and plays the role of an adapter protein, bringing Elba1 and 2 together, thereby establishing a complex that recognizes the asymmetric sequence motif through the BEN domains of Elba1 and 2. The chain is Early boundary activity protein 3 from Drosophila melanogaster (Fruit fly).